Consider the following 621-residue polypeptide: Type 2 DNA topoisomerase 6 subunit B (621 aa).

ATP is bound by residues Asn-48, Asp-80, 101 to 102, 111 to 118, and Lys-435; these read SR and GQQGIGIS.

This sequence belongs to the TOP6B family. In terms of assembly, homodimer. Heterotetramer of two Top6A and two Top6B chains.

The catalysed reaction is ATP-dependent breakage, passage and rejoining of double-stranded DNA.. Its function is as follows. Relaxes both positive and negative superturns and exhibits a strong decatenase activity. The sequence is that of Type 2 DNA topoisomerase 6 subunit B from Methanosarcina barkeri (strain Fusaro / DSM 804).